The chain runs to 76 residues: uncharacterized protein (76 aa).

The tract at residues 1–28 (MSTEKLEASEEPQAPLANTSETNSIKGD) is disordered. Residues 16 to 26 (LANTSETNSIK) are compositionally biased toward polar residues.

It localises to the cytoplasm. The protein resides in the bud. It is found in the bud neck. This is an uncharacterized protein from Saccharomyces cerevisiae (strain ATCC 204508 / S288c) (Baker's yeast).